A 91-amino-acid polypeptide reads, in one-letter code: UPF0512 protein M (91 aa).

This sequence belongs to the UPF0512 family.

This is UPF0512 protein M from Dictyostelium discoideum (Social amoeba).